The sequence spans 457 residues: Chromosomal replication initiator protein DnaA (457 aa).

The segment at methionine 1–methionine 77 is domain I, interacts with DnaA modulators. The interval methionine 77–threonine 108 is domain II. Residues serine 109–alanine 323 form a domain III, AAA+ region region. ATP-binding residues include glycine 153, glycine 155, lysine 156, and threonine 157. Residues asparagine 324–glutamate 457 are domain IV, binds dsDNA.

It belongs to the DnaA family. Oligomerizes as a right-handed, spiral filament on DNA at oriC.

The protein localises to the cytoplasm. Plays an essential role in the initiation and regulation of chromosomal replication. ATP-DnaA binds to the origin of replication (oriC) to initiate formation of the DNA replication initiation complex once per cell cycle. Binds the DnaA box (a 9 base pair repeat at the origin) and separates the double-stranded (ds)DNA. Forms a right-handed helical filament on oriC DNA; dsDNA binds to the exterior of the filament while single-stranded (ss)DNA is stabiized in the filament's interior. The ATP-DnaA-oriC complex binds and stabilizes one strand of the AT-rich DNA unwinding element (DUE), permitting loading of DNA polymerase. After initiation quickly degrades to an ADP-DnaA complex that is not apt for DNA replication. Binds acidic phospholipids. In Helicobacter pylori (strain J99 / ATCC 700824) (Campylobacter pylori J99), this protein is Chromosomal replication initiator protein DnaA.